A 776-amino-acid chain; its full sequence is Endonuclease MutS2 (776 aa).

330–337 contacts ATP; the sequence is GPNTGGKT. The 76-residue stretch at 701-776 folds into the Smr domain; it reads LDLRGMRYEE…GSGATIAILK (76 aa).

This sequence belongs to the DNA mismatch repair MutS family. MutS2 subfamily. Homodimer. Binds to stalled ribosomes, contacting rRNA.

Its function is as follows. Endonuclease that is involved in the suppression of homologous recombination and thus may have a key role in the control of bacterial genetic diversity. Functionally, acts as a ribosome collision sensor, splitting the ribosome into its 2 subunits. Detects stalled/collided 70S ribosomes which it binds and splits by an ATP-hydrolysis driven conformational change. Acts upstream of the ribosome quality control system (RQC), a ribosome-associated complex that mediates the extraction of incompletely synthesized nascent chains from stalled ribosomes and their subsequent degradation. Probably generates substrates for RQC. This Lactococcus lactis subsp. cremoris (strain MG1363) protein is Endonuclease MutS2.